The primary structure comprises 167 residues: Ribosome maturation factor RimM (167 aa).

The PRC barrel domain maps to 94-165 (ENEFYYSDII…KIIITPMEGL (72 aa)).

Belongs to the RimM family. In terms of assembly, binds ribosomal protein uS19.

It localises to the cytoplasm. In terms of biological role, an accessory protein needed during the final step in the assembly of 30S ribosomal subunit, possibly for assembly of the head region. Essential for efficient processing of 16S rRNA. May be needed both before and after RbfA during the maturation of 16S rRNA. It has affinity for free ribosomal 30S subunits but not for 70S ribosomes. The sequence is that of Ribosome maturation factor RimM from Staphylococcus aureus (strain Mu3 / ATCC 700698).